A 267-amino-acid polypeptide reads, in one-letter code: Phosphoethanolamine/phosphocholine phosphatase (267 aa).

The Nucleophile role is filled by Asp32. Mg(2+) is bound by residues Asp32 and Asp34. Catalysis depends on Asp34, which acts as the Proton donor. Asp43 and Asp123 together coordinate substrate. Mg(2+) is bound at residue Asp203.

It belongs to the HAD-like hydrolase superfamily. PHOSPHO family. The cofactor is Mg(2+). Expressed at sites of mineralization in bone and cartilage. Highly expressed in osteoblast cell line SaOS-2 which produces a mineralized matrix, but not in MG-63 cell line, which do not mineralize.

The protein resides in the extracellular vesicle. It carries out the reaction phosphoethanolamine + H2O = ethanolamine + phosphate. The catalysed reaction is phosphocholine + H2O = choline + phosphate. Functionally, phosphatase that has a high activity toward phosphoethanolamine (PEA) and phosphocholine (PCho). Involved in the generation of inorganic phosphate for bone mineralization. Acts in a non-redundant manner with PHOSPHO1 in skeletal mineralization: while PHOSPHO1 mediates the initiation of hydroxyapatite crystallization in the matrix vesicles (MVs), ALPL/TNAP catalyzes the spread of hydroxyapatite crystallization in the extracellular matrix. In Homo sapiens (Human), this protein is Phosphoethanolamine/phosphocholine phosphatase.